We begin with the raw amino-acid sequence, 366 residues long: tRNA-specific 2-thiouridylase MnmA (366 aa).

Residues 6–13 (AMSGGVDS) and L32 contribute to the ATP site. C101 serves as the catalytic Nucleophile. C101 and C198 are joined by a disulfide. Residue G125 participates in ATP binding. The tract at residues 148–150 (KDQ) is interaction with tRNA. C198 serves as the catalytic Cysteine persulfide intermediate.

Belongs to the MnmA/TRMU family.

It is found in the cytoplasm. It carries out the reaction S-sulfanyl-L-cysteinyl-[protein] + uridine(34) in tRNA + AH2 + ATP = 2-thiouridine(34) in tRNA + L-cysteinyl-[protein] + A + AMP + diphosphate + H(+). Its function is as follows. Catalyzes the 2-thiolation of uridine at the wobble position (U34) of tRNA, leading to the formation of s(2)U34. This is tRNA-specific 2-thiouridylase MnmA from Nocardioides sp. (strain ATCC BAA-499 / JS614).